Here is a 445-residue protein sequence, read N- to C-terminus: tRNA-2-methylthio-N(6)-dimethylallyladenosine synthase (445 aa).

The MTTase N-terminal domain maps to 7-121 (KHFYIKSFGC…LPELIEKAAS (115 aa)). The [4Fe-4S] cluster site is built by Cys-16, Cys-52, Cys-84, Cys-156, Cys-160, and Cys-163. The Radical SAM core domain occupies 142–374 (RQVGASAFLT…QALLNQQQFD (233 aa)). Residues 377–438 (QQTIGRKATV…PNSVKGQFLD (62 aa)) form the TRAM domain.

Belongs to the methylthiotransferase family. MiaB subfamily. As to quaternary structure, monomer. The cofactor is [4Fe-4S] cluster.

Its subcellular location is the cytoplasm. It catalyses the reaction N(6)-dimethylallyladenosine(37) in tRNA + (sulfur carrier)-SH + AH2 + 2 S-adenosyl-L-methionine = 2-methylsulfanyl-N(6)-dimethylallyladenosine(37) in tRNA + (sulfur carrier)-H + 5'-deoxyadenosine + L-methionine + A + S-adenosyl-L-homocysteine + 2 H(+). Its function is as follows. Catalyzes the methylthiolation of N6-(dimethylallyl)adenosine (i(6)A), leading to the formation of 2-methylthio-N6-(dimethylallyl)adenosine (ms(2)i(6)A) at position 37 in tRNAs that read codons beginning with uridine. The sequence is that of tRNA-2-methylthio-N(6)-dimethylallyladenosine synthase from Zymomonas mobilis subsp. mobilis (strain ATCC 31821 / ZM4 / CP4).